The primary structure comprises 333 residues: Adenosine deaminase (333 aa).

The Zn(2+) site is built by His-12 and His-14. Substrate contacts are provided by His-14, Asp-16, and Gly-170. His-197 lines the Zn(2+) pocket. The active-site Proton donor is Glu-200. Asp-278 contributes to the Zn(2+) binding site. Position 279 (Asp-279) interacts with substrate.

This sequence belongs to the metallo-dependent hydrolases superfamily. Adenosine and AMP deaminases family. Adenosine deaminase subfamily. Zn(2+) is required as a cofactor.

The enzyme catalyses adenosine + H2O + H(+) = inosine + NH4(+). It carries out the reaction 2'-deoxyadenosine + H2O + H(+) = 2'-deoxyinosine + NH4(+). In terms of biological role, catalyzes the hydrolytic deamination of adenosine and 2-deoxyadenosine. The protein is Adenosine deaminase of Proteus mirabilis (strain HI4320).